The following is a 247-amino-acid chain: Neurotrophic factor BDNF precursor form (247 aa).

The N-terminal stretch at 1–18 (MTILFLTMVISYFGCMKA) is a signal peptide. The propeptide occupies 19-128 (APMKEANARG…AANMSMRVRR (110 aa)). Asn121 carries N-linked (GlcNAc...) asparagine glycosylation. Cystine bridges form between Cys141–Cys208, Cys186–Cys237, and Cys196–Cys239.

The protein belongs to the NGF-beta family. In terms of assembly, monomers and homodimers. Binds to NTRK2/TRKB. Can form heterodimers with other neurotrophin family members, such as NTF3 and NTF4 (in vitro), but the physiological relevance of this is not clear. BDNF precursor form: interacts with the heterodimer formed by NGFR and SORCS2. Mature BDNF has much lower affinity for the heterodimer formed by NGFR and SORCS2. In terms of processing, N-glycosylated and glycosulfated, contrary to mature BDNF. Mature BDNF is produced by proteolytic removal of the propeptide, catalyzed by a FURIN family member. In addition, the precursor form is proteolytically cleaved within the propeptide, but this is not an obligatory intermediate for the production of mature BDNF. Can be converted into mature BDNF by plasmin (PLG).

It localises to the secreted. Functionally, important signaling molecule that activates signaling cascades downstream of NTRK2. During development, promotes the survival and differentiation of selected neuronal populations of the peripheral and central nervous systems. Participates in axonal growth, pathfinding and in the modulation of dendritic growth and morphology. Major regulator of synaptic transmission and plasticity at adult synapses in many regions of the CNS. The versatility of BDNF is emphasized by its contribution to a range of adaptive neuronal responses including long-term potentiation (LTP), long-term depression (LTD), certain forms of short-term synaptic plasticity, as well as homeostatic regulation of intrinsic neuronal excitability. Important signaling molecule that activates signaling cascades downstream of NTRK2. Activates signaling cascades via the heterodimeric receptor formed by NGFR and SORCS2. Signaling via NGFR and SORCS2 plays a role in synaptic plasticity and long-term depression (LTD). Binding to NGFR and SORCS2 promotes neuronal apoptosis. Promotes neuronal growth cone collapse. In Equus caballus (Horse), this protein is Neurotrophic factor BDNF precursor form (BDNF).